The sequence spans 321 residues: Ubiquinone biosynthesis protein COQ4, mitochondrial (321 aa).

Zn(2+)-binding residues include H205, D206, H209, and E221.

Belongs to the COQ4 family. As to quaternary structure, component of a multi-subunit COQ enzyme complex, composed of at least COQ3, COQ4, COQ5, COQ6, COQ7 and COQ9. It depends on Zn(2+) as a cofactor.

Its subcellular location is the mitochondrion inner membrane. It catalyses the reaction a 4-hydroxy-3-methoxy-5-(all-trans-polyprenyl)benzoate + H(+) = a 2-methoxy-6-(all-trans-polyprenyl)phenol + CO2. It participates in cofactor biosynthesis; ubiquinone biosynthesis. Its function is as follows. Lyase that catalyzes the C1-decarboxylation of 4-hydroxy-3-methoxy-5-(all-trans-polyprenyl)benzoic acid into 2-methoxy-6-(all-trans-polyprenyl)phenol during ubiquinone biosynthesis. This chain is Ubiquinone biosynthesis protein COQ4, mitochondrial, found in Candida tropicalis (strain ATCC MYA-3404 / T1) (Yeast).